The chain runs to 653 residues: Chaperone protein HtpG (653 aa).

The segment at 1 to 361 (MSETNQVQNH…SNDLPLNVSR (361 aa)) is a; substrate-binding. A b region spans residues 362-578 (EILQDNKVTQ…DDDMSSQMAK (217 aa)). The segment at 579 to 653 (LMASVGQEVP…LNKLMLSLTK (75 aa)) is c.

It belongs to the heat shock protein 90 family. Homodimer.

Its subcellular location is the cytoplasm. Its function is as follows. Molecular chaperone. Has ATPase activity. This chain is Chaperone protein HtpG, found in Colwellia psychrerythraea (strain 34H / ATCC BAA-681) (Vibrio psychroerythus).